A 192-amino-acid chain; its full sequence is Leucine-rich repeat-containing protein 51 (192 aa).

3 LRR repeats span residues 49-71 (SLTQ…NQVA), 80-101 (NLAW…LTTF), and 103-124 (NLSV…NKLA). The region spanning 137–175 (NPMEEEKGYRQYVLCTLPHITTFDFSGVTKADRTTAEVW) is the LRRCT domain.

It is found in the cytoplasm. This Macaca mulatta (Rhesus macaque) protein is Leucine-rich repeat-containing protein 51.